The primary structure comprises 259 residues: (3R)-3-hydroxyacyl-CoA dehydrogenase (259 aa).

NAD(+)-binding positions include 13 to 21 and 40 to 41; these read LVTGAGSGI and DL. Serine 58 carries the phosphoserine modification. An N6-acetyllysine modification is found at lysine 66. 72–74 is a binding site for NAD(+); sequence ADV. Serine 154 is a substrate binding site. The residue at position 158 (lysine 158) is an N6-succinyllysine. Tyrosine 167 acts as the Proton acceptor in catalysis. NAD(+)-binding positions include 167–171 and 200–202; these read YASSK and IAT. The residue at position 171 (lysine 171) is an N6-succinyllysine.

Belongs to the short-chain dehydrogenases/reductases (SDR) family. In terms of assembly, heterotetramer with CBR4; contains two molecules of HSD17B8 and CBR4. As to expression, kidney, liver, testis, ovary and spleen. Oviduct, uterus, mammary gland, vagina, prostate, clitoral gland and moderately heart, dorsal skin, brain and lung.

The protein resides in the mitochondrion matrix. It catalyses the reaction a (3R)-3-hydroxyacyl-CoA + NAD(+) = a 3-oxoacyl-CoA + NADH + H(+). It carries out the reaction 17beta-estradiol + NAD(+) = estrone + NADH + H(+). The enzyme catalyses testosterone + NAD(+) = androst-4-ene-3,17-dione + NADH + H(+). The catalysed reaction is 17beta-hydroxy-5alpha-androstan-3-one + NAD(+) = 5alpha-androstan-3,17-dione + NADH + H(+). It functions in the pathway lipid metabolism; fatty acid biosynthesis. It participates in steroid biosynthesis; estrogen biosynthesis. Its pathway is lipid metabolism; mitochondrial fatty acid beta-oxidation. In terms of biological role, required for the solubility and assembly of the heterotetramer 3-ketoacyl-[acyl carrier protein] (ACP) reductase functional complex (KAR or KAR1) that forms part of the mitochondrial fatty acid synthase (mtFAS). Alpha-subunit of the KAR complex, acts as scaffold protein, required for the stability of carbonyl reductase type-4 (CBR4, beta-subunit of the KAR complex) and for its 3-ketoacyl-ACP reductase activity, thereby participating in mitochondrial fatty acid biosynthesis. Catalyzes the NAD-dependent conversion of (3R)-3-hydroxyacyl-CoA into 3-ketoacyl-CoA (3-oxoacyl-CoA) with no chain length preference, this enzymatic activity is not needed for the KAR function. Prefers (3R)-3-hydroxyacyl-CoA over (3S)-3-hydroxyacyl-CoA and displays enzymatic activity only in the presence of NAD(+)(H). Cooperates with enoyl-CoA hydratase 1 in mitochondria, together they constitute an alternative route to the auxiliary enzyme pathways for the breakdown of Z-PUFA (cis polyunsaturated fatty acid) enoyl-esters. NAD-dependent 17-beta-hydroxysteroid dehydrogenase with highest activity towards estradiol. It efficiently catalyzes the oxidation of estradiol (E2), testosterone, and dihydrotestosterone. Primarily an oxidative enzyme, it can switch to a reductive mode determined in the appropriate physiologic milieu and catalyze the reduction of estrone (E1) to form biologically active estradiol (E2). This is (3R)-3-hydroxyacyl-CoA dehydrogenase (Hsd17b8) from Mus musculus (Mouse).